We begin with the raw amino-acid sequence, 2049 residues long: Polyunsaturated fatty acid synthase subunit B (2049 aa).

Ketosynthase family 3 (KS3) domains lie at 15–442 (EKRI…VFEE) and 468–908 (NMRI…LLSD). Active-site for beta-ketoacyl synthase 1 activity residues include cysteine 196, histidine 333, and histidine 368. Residues 467–984 (NNMRIAITGM…LGETLAQEAD (518 aa)) form a chain length factor (CLF) domain region. Residues 1044–1377 (RVAFMYGEGR…QRSHVTGAMD (334 aa)) are acyltransferase (AT) domain. The tract at residues 1500–1531 (NKDNQPAVAPAATAAPTPKPKPAASSGKPVPS) is disordered. Positions 1505 to 1531 (PAVAPAATAAPTPKPKPAASSGKPVPS) are enriched in low complexity. The tract at residues 1579–1887 (SRAFMKTYGV…SRANKLYELF (309 aa)) is enoyl reductase (ER) domain.

Component of the polyunsaturated fatty acid synthase complex composed of at least ORF-A, ORF-B and ORF-C.

The protein operates within lipid metabolism; fatty acid biosynthesis. Its function is as follows. Poliketide synthase-like protein; part of the polyunsaturated fatty acid synthase composed of the 3 PKS-like subunits A, B and C. While the saturated fatty acids (SFAs) in Thraustochytrium are produced by the conventional fatty acid synthase (FAS) pathway, polyunsaturated fatty acids (PUFAs) including docosahexeanoic acid (DHA) and docosapentaenoic acid (DPA) are synthesized via an anaerobical PKS pathway. PUFA synthase assimilates fatty acyl-CoA, the product of FAS, as the starter unit to synthesize DPA, and this starter unit may be butyryl-CoA, hexanoyl-CoA, or octanoyl-CoA. DPA and DHA biosynthesis seem to differ by the reduction at the N-3 position by PUFA synthase, not the extension of carbon chain. In DHA biosynthesis, PUFA synthase extends the fatty acyl chain from the methyl toward the carboxyl end, and the double bond is formed when the carbon chain is growing, instead of afterward. Therefore, PUFA synthase is unable to transform DPA to DHA, suggesting that DPA is not the precursor of DHA. Moreover, DPA molecule is partly extended by FAS KS domain, so DPA biosynthesis is less dependent on PUFA synthase KS domain than DHA. The protein is Polyunsaturated fatty acid synthase subunit B of Thraustochytrium sp. (strain ATCC 26185 / S-3).